The primary structure comprises 117 residues: MDMRVPAQLLGLLLLWFPGSRCDIQMTQSPSSVSASVGDRVTITCRASQGISSWLAWYQQKPGKAPKLLIYAASSLQSGVPSRFSGSGSGTDFTLTISSLQPEDFATYYCQQANSFP.

A signal peptide spans 1-22 (MDMRVPAQLLGLLLLWFPGSRC). Residues 23–45 (DIQMTQSPSSVSASVGDRVTITC) are framework-1. The Ig-like domain occupies 24–117 (IQMTQSPSSV…YYCQQANSFP (94 aa)). Cysteines 45 and 110 form a disulfide. The interval 46–56 (RASQGISSWLA) is complementarity-determining-1. Residues 57 to 71 (WYQQKPGKAPKLLIY) are framework-2. The segment at 72-78 (AASSLQS) is complementarity-determining-2. The framework-3 stretch occupies residues 79–110 (GVPSRFSGSGSGTDFTLTISSLQPEDFATYYC). Positions 111–117 (QQANSFP) are complementarity-determining-3.

As to quaternary structure, immunoglobulins are composed of two identical heavy chains and two identical light chains; disulfide-linked.

The protein localises to the secreted. Its subcellular location is the cell membrane. In terms of biological role, v region of the variable domain of immunoglobulin light chains that participates in the antigen recognition. Immunoglobulins, also known as antibodies, are membrane-bound or secreted glycoproteins produced by B lymphocytes. In the recognition phase of humoral immunity, the membrane-bound immunoglobulins serve as receptors which, upon binding of a specific antigen, trigger the clonal expansion and differentiation of B lymphocytes into immunoglobulins-secreting plasma cells. Secreted immunoglobulins mediate the effector phase of humoral immunity, which results in the elimination of bound antigens. The antigen binding site is formed by the variable domain of one heavy chain, together with that of its associated light chain. Thus, each immunoglobulin has two antigen binding sites with remarkable affinity for a particular antigen. The variable domains are assembled by a process called V-(D)-J rearrangement and can then be subjected to somatic hypermutations which, after exposure to antigen and selection, allow affinity maturation for a particular antigen. The chain is Immunoglobulin kappa variable 1-12 from Homo sapiens (Human).